Consider the following 489-residue polypeptide: WPP domain-interacting protein 1 (489 aa).

Positions 49 to 73 (SNSVELGKPMSFDSPGDGGGAYSPV) are disordered. 3 short sequence motifs (nuclear localization signal) span residues 80–81 (RK), 83–84 (RR), and 104–105 (KR). Residues 195–264 (PMISSGQGGN…DDAGGEGGES (70 aa)) form a disordered region. The segment covering 215–224 (GESVDFEKEN) has biased composition (basic and acidic residues). Positions 323-446 (EIVTLVNNVE…QDLQNDCIEI (124 aa)) form a coiled coil. Positions 459 to 489 (SYVLIQLVLLSTVVLLLLSQLLPEPDTVVPT) constitute a KASH domain. The helical transmembrane segment at 460 to 480 (YVLIQLVLLSTVVLLLLSQLL) threads the bilayer.

As to quaternary structure, homodimer and heterodimer with WIP2. Component of Ran complexes at least composed of WIT1 or WIT2, RANGAP1 or RANGAP2, and WIP1 or WIP2 or WIP3. Interacts with RANGAP1, RANGAP2, WPP1/MAF1, and WPP2/MAF2. Interacts with SUN1 and SUN2. Interacts with KIN1. Core component of the LINC complex which is composed of inner nuclear membrane SUN domain-containing proteins coupled to outer nuclear membrane WIP and WIT proteins. The LINC complex also involves nucleoskeletal proteins CRWN/LINC and possibly KAKU4 and the cytoskeletal myosin KAKU1. Interacts with WIT1 and SUN2. Interacts with WIT2. Interacts with SUN3. As to expression, expressed in seedlings, roots, stems, leaves, and flowers.

Its subcellular location is the nucleus envelope. It is found in the nucleus membrane. In terms of biological role, mediates and enhances the nuclear envelope docking of RANGAP proteins mediated by WIT1 and WIT2 in the undifferentiated cells of root tips. As component of the SUN-WIP-WIT2-KAKU1 complex, mediates the transfer of cytoplasmic forces to the nuclear envelope (NE), leading to nuclear shape changes. The sequence is that of WPP domain-interacting protein 1 (WIP1) from Arabidopsis thaliana (Mouse-ear cress).